Here is a 166-residue protein sequence, read N- to C-terminus: Putative 4-hydroxy-4-methyl-2-oxoglutarate aldolase 1 (166 aa).

An N-acetylalanine modification is found at alanine 2. Substrate-binding positions include 81 to 84 (GGNP) and arginine 103. Aspartate 104 provides a ligand contact to a divalent metal cation.

Belongs to the class II aldolase/RraA-like family. As to quaternary structure, homotrimer. A divalent metal cation serves as cofactor.

It catalyses the reaction 4-hydroxy-4-methyl-2-oxoglutarate = 2 pyruvate. The catalysed reaction is oxaloacetate + H(+) = pyruvate + CO2. In terms of biological role, catalyzes the aldol cleavage of 4-hydroxy-4-methyl-2-oxoglutarate (HMG) into 2 molecules of pyruvate. Also contains a secondary oxaloacetate (OAA) decarboxylase activity due to the common pyruvate enolate transition state formed following C-C bond cleavage in the retro-aldol and decarboxylation reactions. The sequence is that of Putative 4-hydroxy-4-methyl-2-oxoglutarate aldolase 1 from Arabidopsis thaliana (Mouse-ear cress).